The chain runs to 208 residues: Outer-membrane lipoprotein carrier protein (208 aa).

Residues 1–22 form the signal peptide; sequence MKNLLCAVMLTSPLLYSTAVFA.

This sequence belongs to the LolA family. Monomer.

It is found in the periplasm. In terms of biological role, participates in the translocation of lipoproteins from the inner membrane to the outer membrane. Only forms a complex with a lipoprotein if the residue after the N-terminal Cys is not an aspartate (The Asp acts as a targeting signal to indicate that the lipoprotein should stay in the inner membrane). The chain is Outer-membrane lipoprotein carrier protein from Shewanella putrefaciens (strain CN-32 / ATCC BAA-453).